The following is a 322-amino-acid chain: HPr kinase/phosphorylase (322 aa).

Active-site residues include His146 and Lys167. 161 to 168 (GDSGLGKS) serves as a coordination point for ATP. Ser168 provides a ligand contact to Mg(2+). Asp185 serves as the catalytic Proton acceptor; for phosphorylation activity. Proton donor; for dephosphorylation activity. The tract at residues 209-218 (LEVRGLGLLD) is important for the catalytic mechanism of both phosphorylation and dephosphorylation. A Mg(2+)-binding site is contributed by Glu210. The active site involves Arg250. Residues 271–276 (QVAAGR) form an important for the catalytic mechanism of dephosphorylation region.

This sequence belongs to the HPrK/P family. As to quaternary structure, homohexamer. The cofactor is Mg(2+).

The enzyme catalyses [HPr protein]-L-serine + ATP = [HPr protein]-O-phospho-L-serine + ADP + H(+). It catalyses the reaction [HPr protein]-O-phospho-L-serine + phosphate + H(+) = [HPr protein]-L-serine + diphosphate. Catalyzes the ATP- as well as the pyrophosphate-dependent phosphorylation of a specific serine residue in HPr, a phosphocarrier protein of the phosphoenolpyruvate-dependent sugar phosphotransferase system (PTS). HprK/P also catalyzes the pyrophosphate-producing, inorganic phosphate-dependent dephosphorylation (phosphorolysis) of seryl-phosphorylated HPr (P-Ser-HPr). This Burkholderia cenocepacia (strain HI2424) protein is HPr kinase/phosphorylase.